The primary structure comprises 652 residues: Vacuolar fusion protein MON1 homolog A (652 aa).

The disordered stretch occupies residues 102–141; the sequence is MQRKRSSECLDGTLTPSDGQSMERAESPTPGMAQGMEPGA. Residues S128 and S153 each carry the phosphoserine modification. Position 158 is a phosphothreonine (T158). The interval 158-185 is disordered; it reads TESEDGAASGDSHKEGTRGPPPLPTDMR. At S188 the chain carries Phosphoserine. Positions 211 to 245 are disordered; sequence PGSSEDWLEPPGAVGRPATEPPREGTTEGDEEDAT.

This sequence belongs to the MON1/SAND family. As to quaternary structure, interacts with CCZ1. Found in a complex with RMC1, CCZ1, MON1A and MON1B. The MON1A-CCZ1B complex interacts with RIMOC1. The MON1A-CCZ1B complex interacts with RAB7A and this interaction is enhanced in the presence of RIMOC1.

Functionally, plays an important role in membrane trafficking through the secretory apparatus. Not involved in endocytic trafficking to lysosomes. Acts in concert with CCZ1, as a guanine exchange factor (GEF) for RAB7, promotes the exchange of GDP to GTP, converting it from an inactive GDP-bound form into an active GTP-bound form. The chain is Vacuolar fusion protein MON1 homolog A (MON1A) from Homo sapiens (Human).